Consider the following 99-residue polypeptide: Putative septation protein SpoVG (99 aa).

Belongs to the SpoVG family.

Its function is as follows. Could be involved in septation. The protein is Putative septation protein SpoVG of Onion yellows phytoplasma (strain OY-M).